The chain runs to 72 residues: Translation initiation factor IF-1 (72 aa).

In terms of domain architecture, S1-like spans 1–72; sequence MAKSDVIEVD…DKGRITYRYK (72 aa).

It belongs to the IF-1 family. As to quaternary structure, component of the 30S ribosomal translation pre-initiation complex which assembles on the 30S ribosome in the order IF-2 and IF-3, IF-1 and N-formylmethionyl-tRNA(fMet); mRNA recruitment can occur at any time during PIC assembly.

The protein resides in the cytoplasm. Its function is as follows. One of the essential components for the initiation of protein synthesis. Stabilizes the binding of IF-2 and IF-3 on the 30S subunit to which N-formylmethionyl-tRNA(fMet) subsequently binds. Helps modulate mRNA selection, yielding the 30S pre-initiation complex (PIC). Upon addition of the 50S ribosomal subunit IF-1, IF-2 and IF-3 are released leaving the mature 70S translation initiation complex. This is Translation initiation factor IF-1 from Sulfurimonas denitrificans (strain ATCC 33889 / DSM 1251) (Thiomicrospira denitrificans (strain ATCC 33889 / DSM 1251)).